A 337-amino-acid chain; its full sequence is N-acetyl-gamma-glutamyl-phosphate reductase (337 aa).

Cys155 is an active-site residue.

The protein belongs to the NAGSA dehydrogenase family. Type 1 subfamily.

It is found in the cytoplasm. The catalysed reaction is N-acetyl-L-glutamate 5-semialdehyde + phosphate + NADP(+) = N-acetyl-L-glutamyl 5-phosphate + NADPH + H(+). Its pathway is amino-acid biosynthesis; L-arginine biosynthesis; N(2)-acetyl-L-ornithine from L-glutamate: step 3/4. In terms of biological role, catalyzes the NADPH-dependent reduction of N-acetyl-5-glutamyl phosphate to yield N-acetyl-L-glutamate 5-semialdehyde. The protein is N-acetyl-gamma-glutamyl-phosphate reductase of Alteromonas mediterranea (strain DSM 17117 / CIP 110805 / LMG 28347 / Deep ecotype).